The sequence spans 147 residues: Large ribosomal subunit protein uL13 (147 aa).

This sequence belongs to the universal ribosomal protein uL13 family. As to quaternary structure, part of the 50S ribosomal subunit.

Functionally, this protein is one of the early assembly proteins of the 50S ribosomal subunit, although it is not seen to bind rRNA by itself. It is important during the early stages of 50S assembly. This chain is Large ribosomal subunit protein uL13, found in Frankia casuarinae (strain DSM 45818 / CECT 9043 / HFP020203 / CcI3).